The following is a 322-amino-acid chain: Ethylmalonyl-CoA decarboxylase (322 aa).

The residue at position 232 (Lys-232) is an N6-acetyllysine; alternate. Lys-232 is subject to N6-succinyllysine; alternate. Residue Lys-316 is modified to N6-succinyllysine.

This sequence belongs to the enoyl-CoA hydratase/isomerase family.

Its subcellular location is the cytoplasm. It localises to the cytosol. It catalyses the reaction (2S)-ethylmalonyl-CoA + H(+) = butanoyl-CoA + CO2. The enzyme catalyses (S)-methylmalonyl-CoA + H(+) = propanoyl-CoA + CO2. It carries out the reaction (2R)-ethylmalonyl-CoA + H(+) = butanoyl-CoA + CO2. Decarboxylates ethylmalonyl-CoA, a potentially toxic metabolite, to form butyryl-CoA, suggesting it might be involved in metabolite proofreading. Acts preferentially on (S)-ethylmalonyl-CoA but also has some activity on the (R)-isomer. Also has methylmalonyl-CoA decarboxylase activity at lower level. This Mus musculus (Mouse) protein is Ethylmalonyl-CoA decarboxylase (Echdc1).